Here is a 283-residue protein sequence, read N- to C-terminus: Elongation factor Ts (283 aa).

The segment at 79–82 (TDFV) is involved in Mg(2+) ion dislocation from EF-Tu.

The protein belongs to the EF-Ts family.

The protein localises to the cytoplasm. In terms of biological role, associates with the EF-Tu.GDP complex and induces the exchange of GDP to GTP. It remains bound to the aminoacyl-tRNA.EF-Tu.GTP complex up to the GTP hydrolysis stage on the ribosome. This chain is Elongation factor Ts, found in Shewanella frigidimarina (strain NCIMB 400).